Reading from the N-terminus, the 396-residue chain is Alpha-1-antitrypsin (396 aa).

The signal sequence occupies residues 1-2 (HV). The segment at 1–24 (HVEDPQGDAAQKTDTSHHDQEHST) is disordered. The span at 14 to 24 (DTSHHDQEHST) shows a compositional bias: basic and acidic residues. Position 16 is a phosphoserine (Ser16). Asn48, Asn85, Asn123, and Asn249 each carry an N-linked (GlcNAc...) asparagine glycan. The RCL stretch occupies residues 351–370 (GAMFLEAIPMSIPPEVKFNK). Phosphoserine is present on Ser361.

Belongs to the serpin family. As to quaternary structure, interacts with CELA2A. Interacts with ERGIC3 and LMAN1/ERGIC53. Interacts with PRSS1/Trypsin. As to expression, plasma.

The protein localises to the secreted. Inhibitor of serine proteases. Its primary target is elastase, but it also has a moderate affinity for plasmin and thrombin. Inhibits trypsin, chymotrypsin and plasminogen activator. In Chlorocebus aethiops (Green monkey), this protein is Alpha-1-antitrypsin (SERPINA1).